A 757-amino-acid chain; its full sequence is Mitofusin-2 (757 aa).

The Cytoplasmic portion of the chain corresponds to 1–604 (MSLLFSRCNS…TQEELMVSMV (604 aa)). The tract at residues 30–94 (KHFVTAKKKI…VRGISEVLAR (65 aa)) is part of a helix bundle domain, formed by helices from N-terminal and C-terminal regions. The region spanning 93–342 (ARRHMKVAFF…VRMFEFQNFE (250 aa)) is the Dynamin-type G domain. A G1 motif region spans residues 103 to 110 (GRTSNGKS). Residue 106–111 (SNGKST) participates in GTP binding. Phosphothreonine; by PINK1 is present on Thr111. The G2 motif stretch occupies residues 129-130 (TT). The tract at residues 199–202 (DSPG) is G3 motif. 258 to 261 (NRWD) is a GTP binding site. The interval 258–261 (NRWD) is G4 motif. Residue Glu288 is a region of interest, G5 motif. Residues Ser305 and Lys307 each contribute to the GTP site. The segment at 359-385 (EQHTVRAKQIAEAVRLIMDSLHIAAQE) is part of a helix bundle domain, formed by helices from N-terminal and C-terminal regions. A coiled-coil region spans residues 406 to 434 (KQLELLAQDYKLRIKQITEEVERQVSTAM). The residue at position 442 (Ser442) is a Phosphoserine. A helical transmembrane segment spans residues 605–625 (TGLASLTSRTSMGILVVGGVV). Position 626 (Trp626) is a topological domain, mitochondrial intermembrane. The helical transmembrane segment at 627-647 (KAVGWRLIALSFGLYGLLYVY) threads the bilayer. Topologically, residues 648–757 (ERLTWTTKAK…FTHQYLQPSR (110 aa)) are cytoplasmic. A coiled-coil region spans residues 696-738 (FAHLCQQVDITRDNLEQEIAAMNKKVEALDSLQSRAKLLRNKA). Positions 722–753 (EALDSLQSRAKLLRNKAGWLDSELNMFTHQYL) are part of a helix bundle domain, formed by helices from N-terminal and C-terminal regions.

Belongs to the TRAFAC class dynamin-like GTPase superfamily. Dynamin/Fzo/YdjA family. Mitofusin subfamily. As to quaternary structure, forms homomultimers and heteromultimers with MFN1. Oligomerization is essential for mitochondrion fusion. Interacts with VAT1. Interacts with STOML2; may form heterooligomers. Interacts (phosphorylated) with PRKN. Interacts with EIF2AK3. Interacts with THG1L; THG1L probably functions as a guanyl-nucleotide exchange factor/GEF, activating MFN2. In terms of processing, phosphorylated by PINK1. Post-translationally, ubiquitinated by non-degradative ubiquitin by PRKN, promoting mitochondrial fusion; deubiquitination by USP30 inhibits mitochondrial fusion. Ubiquitinated by HUWE1 when dietary stearate (C18:0) levels are low; ubiquitination inhibits mitochondrial fusion. Ubiquitous. Expression is markedly reduced in ApoE-knockout mouse atherosclerotic arteries.

It localises to the mitochondrion outer membrane. It catalyses the reaction GTP + H2O = GDP + phosphate + H(+). In terms of biological role, mitochondrial outer membrane GTPase that mediates mitochondrial clustering and fusion. Mitochondria are highly dynamic organelles, and their morphology is determined by the equilibrium between mitochondrial fusion and fission events. Overexpression induces the formation of mitochondrial networks. Membrane clustering requires GTPase activity and may involve a major rearrangement of the coiled coil domains. Plays a central role in mitochondrial metabolism and may be associated with obesity and/or apoptosis processes. Plays an important role in the regulation of vascular smooth muscle cell proliferation. Involved in the clearance of damaged mitochondria via selective autophagy (mitophagy). Is required for PRKN recruitment to dysfunctional mitochondria. Involved in the control of unfolded protein response (UPR) upon ER stress including activation of apoptosis and autophagy during ER stress. Acts as an upstream regulator of EIF2AK3 and suppresses EIF2AK3 activation under basal conditions. This chain is Mitofusin-2 (Mfn2), found in Mus musculus (Mouse).